The sequence spans 512 residues: Cytochrome P450 98A1 (512 aa).

The helical transmembrane segment at 3–23 (ASLLLSVALAVVLIPLSLALL) threads the bilayer. Cys-441 contacts heme.

Belongs to the cytochrome P450 family. The cofactor is heme.

The protein resides in the membrane. This is Cytochrome P450 98A1 (CYP98A1) from Sorghum bicolor (Sorghum).